The primary structure comprises 507 residues: UDP-glycosyltransferase 73D1 (507 aa).

Residues Ser-298, 359-361 (SPQ), 376-384 (HCGWNSTIE), and 398-401 (FAEQ) contribute to the UDP-alpha-D-glucose site.

The protein belongs to the UDP-glycosyltransferase family.

This is UDP-glycosyltransferase 73D1 (UGT73D1) from Arabidopsis thaliana (Mouse-ear cress).